Here is a 202-residue protein sequence, read N- to C-terminus: Guanylate kinase (202 aa).

A Guanylate kinase-like domain is found at 18-200 (LKPVVVFGPS…AYKQLEAICL (183 aa)). 25–32 (GPSGVGKS) is an ATP binding site.

This sequence belongs to the guanylate kinase family.

The catalysed reaction is GMP + ATP = GDP + ADP. Functionally, essential for recycling GMP and indirectly, cGMP. The protein is Guanylate kinase of Schizosaccharomyces pombe (strain 972 / ATCC 24843) (Fission yeast).